Reading from the N-terminus, the 80-residue chain is Small ribosomal subunit protein uS17 (80 aa).

The protein belongs to the universal ribosomal protein uS17 family. Part of the 30S ribosomal subunit.

In terms of biological role, one of the primary rRNA binding proteins, it binds specifically to the 5'-end of 16S ribosomal RNA. The protein is Small ribosomal subunit protein uS17 of Brucella abortus (strain S19).